The primary structure comprises 283 residues: Trafficking protein particle complex subunit 31 (283 aa).

A compositionally biased stretch (polar residues) spans 1–16 (MSQRIIQPSASDQQFP). Disordered regions lie at residues 1 to 20 (MSQR…GKSD) and 126 to 156 (SSKL…RLQE). Low complexity predominate over residues 126-151 (SSKLSNASNSPGMLANSSTATSASAN).

The protein belongs to the TRAPP small subunits family. BET3 subfamily. Part of the multisubunit TRAPP (transport protein particle) I complex composed of BET3, BET5, TRS20, TRS23, TRS31 and TRS33. Part of the multisubunit TRAPP (transport protein particle) II complex composed of BET3, BET5, TRS20, TRS23, TRS31, TRS33, TRS65, TRS85, TRS120 and TRS130. Part of the multisubunit TRAPP (transport protein particle) III complex composed of BET3, BET5, TRS20, TRS23, TRS31, TRS33 and TRS85.

The protein localises to the golgi apparatus. It localises to the cis-Golgi network. It is found in the endoplasmic reticulum. The protein resides in the preautophagosomal structure. Component of the TRAPP I, TRAPP II and TRAPP III complexes which act as guanine nucleotide exchange factors (GEF) for YPT1. TRAPP I plays a key role in the late stages of endoplasmic reticulum to Golgi traffic. TRAPP II plays a role in intra-Golgi transport. TRAPP III plays a role in autophagosome formation. The sequence is that of Trafficking protein particle complex subunit 31 (TRS31) from Saccharomyces cerevisiae (strain ATCC 204508 / S288c) (Baker's yeast).